The following is a 45-amino-acid chain: uncharacterized protein (45 aa).

Belongs to the asfivirus C62L family.

This is an uncharacterized protein from Ornithodoros (relapsing fever ticks).